The chain runs to 572 residues: Phosphoenolpyruvate-protein phosphotransferase (572 aa).

The active-site Tele-phosphohistidine intermediate is the histidine 191. Arginine 298 and arginine 334 together coordinate phosphoenolpyruvate. Mg(2+)-binding residues include glutamate 433 and aspartate 457. Phosphoenolpyruvate contacts are provided by residues 456-457 and arginine 467; that span reads ND. Catalysis depends on cysteine 504, which acts as the Proton donor.

Belongs to the PEP-utilizing enzyme family. In terms of assembly, homodimer. It depends on Mg(2+) as a cofactor.

It is found in the cytoplasm. It carries out the reaction L-histidyl-[protein] + phosphoenolpyruvate = N(pros)-phospho-L-histidyl-[protein] + pyruvate. Its function is as follows. General (non sugar-specific) component of the phosphoenolpyruvate-dependent sugar phosphotransferase system (sugar PTS). This major carbohydrate active-transport system catalyzes the phosphorylation of incoming sugar substrates concomitantly with their translocation across the cell membrane. Enzyme I transfers the phosphoryl group from phosphoenolpyruvate (PEP) to the phosphoryl carrier protein (HPr). This chain is Phosphoenolpyruvate-protein phosphotransferase (ptsI), found in Staphylococcus aureus (strain Mu50 / ATCC 700699).